The primary structure comprises 74 residues: Small ribosomal subunit protein bS18 (74 aa).

Belongs to the bacterial ribosomal protein bS18 family. As to quaternary structure, part of the 30S ribosomal subunit. Forms a tight heterodimer with protein bS6.

Its function is as follows. Binds as a heterodimer with protein bS6 to the central domain of the 16S rRNA, where it helps stabilize the platform of the 30S subunit. This chain is Small ribosomal subunit protein bS18, found in Novosphingobium aromaticivorans (strain ATCC 700278 / DSM 12444 / CCUG 56034 / CIP 105152 / NBRC 16084 / F199).